Here is a 292-residue protein sequence, read N- to C-terminus: Syntaxin-19 (292 aa).

A t-SNARE coiled-coil homology domain is found at 207 to 269; the sequence is LSEIEQRHKE…NNTKEKFGLA (63 aa).

Belongs to the syntaxin family. In terms of assembly, interacts with EGFR. In terms of tissue distribution, expressed in stomach, lung and skin (at protein level). In stomach, strongly expressed in the mucosa of the fundus, in epithelial cells of gastric pits, and in gastric glands (at protein level). In skin, expressed in the epidermis, dermis, and epithelial layer of the hair bulb (at protein level).

It localises to the cell membrane. The protein localises to the cytoplasm. Its function is as follows. Plays a role in endosomal trafficking of the epidermal growth factor receptor (EGFR). In Mus musculus (Mouse), this protein is Syntaxin-19.